The primary structure comprises 146 residues: Probable cyclic pyranopterin monophosphate synthase (146 aa).

Substrate contacts are provided by residues 66-68 and 102-103; these read LTH and ME. The active site involves D117.

This sequence belongs to the MoaC family. In terms of assembly, homohexamer; trimer of dimers.

It catalyses the reaction (8S)-3',8-cyclo-7,8-dihydroguanosine 5'-triphosphate = cyclic pyranopterin phosphate + diphosphate. It functions in the pathway cofactor biosynthesis; molybdopterin biosynthesis. Its function is as follows. Catalyzes the conversion of (8S)-3',8-cyclo-7,8-dihydroguanosine 5'-triphosphate to cyclic pyranopterin monophosphate (cPMP). This chain is Probable cyclic pyranopterin monophosphate synthase, found in Aeropyrum pernix (strain ATCC 700893 / DSM 11879 / JCM 9820 / NBRC 100138 / K1).